The sequence spans 609 residues: Proteasome-associated ATPase (609 aa).

The disordered stretch occupies residues 1–24; the sequence is MADSERSEAFGTPDDTPLSSNDAA. Residues 19 to 96 are a coiled coil; the sequence is SSNDAAELEQ…LREEVDRLGQ (78 aa). Residue 296–301 participates in ATP binding; sequence GCGKTL. The tract at residues 608 to 609 is docks into pockets in the proteasome alpha-ring; sequence YL.

It belongs to the AAA ATPase family. As to quaternary structure, homohexamer. Assembles into a hexameric ring structure that caps the 20S proteasome core. Strongly interacts with the prokaryotic ubiquitin-like protein Pup through a hydrophobic interface; the interacting region of ARC lies in its N-terminal coiled-coil domain. There is one Pup binding site per ARC hexamer ring. Upon ATP-binding, the C-terminus of ARC interacts with the alpha-rings of the proteasome core, possibly by binding to the intersubunit pockets.

The protein operates within protein degradation; proteasomal Pup-dependent pathway. Functionally, ATPase which is responsible for recognizing, binding, unfolding and translocation of pupylated proteins into the bacterial 20S proteasome core particle. May be essential for opening the gate of the 20S proteasome via an interaction with its C-terminus, thereby allowing substrate entry and access to the site of proteolysis. Thus, the C-termini of the proteasomal ATPase may function like a 'key in a lock' to induce gate opening and therefore regulate proteolysis. The sequence is that of Proteasome-associated ATPase from Mycobacterium ulcerans (strain Agy99).